A 189-amino-acid chain; its full sequence is Glycerol-3-phosphate acyltransferase (189 aa).

Helical transmembrane passes span 1 to 21, 77 to 97, 111 to 131, and 151 to 171; these read MFWLLALLAYLLGSLSFAIVL, LQEQAWVGVCAVLGHLFPVYF, MLMGLYFPAALLAIAAWLLTF, and LLAWREPAALLPISVLTVMIV.

The protein belongs to the PlsY family. In terms of assembly, probably interacts with PlsX.

The protein resides in the cell inner membrane. The enzyme catalyses an acyl phosphate + sn-glycerol 3-phosphate = a 1-acyl-sn-glycero-3-phosphate + phosphate. It participates in lipid metabolism; phospholipid metabolism. In terms of biological role, catalyzes the transfer of an acyl group from acyl-phosphate (acyl-PO(4)) to glycerol-3-phosphate (G3P) to form lysophosphatidic acid (LPA). This enzyme utilizes acyl-phosphate as fatty acyl donor, but not acyl-CoA or acyl-ACP. The polypeptide is Glycerol-3-phosphate acyltransferase (Pseudomonas putida (strain W619)).